The sequence spans 233 residues: Superoxide dismutase [Mn], mitochondrial (233 aa).

The transit peptide at 1-27 directs the protein to the mitochondrion; sequence MALRSLVTRKNLPSAFKAATGLGQLRG. H55, H103, D192, and H196 together coordinate Mn(2+).

This sequence belongs to the iron/manganese superoxide dismutase family. In terms of assembly, homotetramer. It depends on Mn(2+) as a cofactor. Present in all tissues examined (leaf, petiole, root, latex, callus) with young leaves showing the highest levels in intact plants.

The protein resides in the mitochondrion matrix. The catalysed reaction is 2 superoxide + 2 H(+) = H2O2 + O2. Destroys superoxide anion radicals which are normally produced within the cells and which are toxic to biological systems. The polypeptide is Superoxide dismutase [Mn], mitochondrial (SODA) (Hevea brasiliensis (Para rubber tree)).